A 448-amino-acid polypeptide reads, in one-letter code: MSHRYIPLTEKDKQEMLETIGANSIEELFGDVPKEILLDRELDIPNGEDETTLLKRLSRIAKKNITKEDYTSFLGAGVYDHYTPAVVDAMISRSEFYTAYTPYQPEISQGELQAIFEFQTLICELTGMDVANSSMYDGITAFAEACILAFSQTKKNKIVVSKGLHYQALQVLHTYSKIRNDYEIVEVDLDGTVTDLEKLEDAIDDETAAVAVQYPNFYGSIEDLEKIKSLIKNKKTLFIVYTNPLSLGLLTPPGDFGADIVVGDTQPFGIPAQFGGPHCGFFATTKKLMRKVPGRLVGQTEDDHGNRGFVLTLQAREQHIRRDKATSNICSNQALNALASSIAMSALGKQGLQDIAVQNFENANYAKNQFKDAGIEVLPGTSFNEFVIKLDKPVKEVNDKLLEEGIIGGFDLSEVNEEFGQAMLIAVTELRTKDEIDTFVKKVGEING.

This sequence belongs to the GcvP family. N-terminal subunit subfamily. In terms of assembly, the glycine cleavage system is composed of four proteins: P, T, L and H. In this organism, the P 'protein' is a heterodimer of two subunits.

It carries out the reaction N(6)-[(R)-lipoyl]-L-lysyl-[glycine-cleavage complex H protein] + glycine + H(+) = N(6)-[(R)-S(8)-aminomethyldihydrolipoyl]-L-lysyl-[glycine-cleavage complex H protein] + CO2. In terms of biological role, the glycine cleavage system catalyzes the degradation of glycine. The P protein binds the alpha-amino group of glycine through its pyridoxal phosphate cofactor; CO(2) is released and the remaining methylamine moiety is then transferred to the lipoamide cofactor of the H protein. This Staphylococcus carnosus (strain TM300) protein is Probable glycine dehydrogenase (decarboxylating) subunit 1.